The following is a 483-amino-acid chain: Cyclic AMP-dependent transcription factor ATF-7 (483 aa).

The segment at 1–285 (MGDDRPFVCN…GMVVGTASTM (285 aa)) is transactivation domain. Residues 7-31 (FVCNAPGCGQRFTNEDHLAVHKHKH) form a C2H2-type zinc finger. Residue Thr51 is modified to Phosphothreonine; by MAPK11. Thr53 and Thr101 each carry phosphothreonine. A Glycyl lysine isopeptide (Lys-Gly) (interchain with G-Cter in SUMO1) cross-link involves residue Lys107. 2 disordered regions span residues 110 to 148 (EPVE…TPTP) and 299 to 345 (HPDA…NRAA). Low complexity-rich tracts occupy residues 114-126 (VDSS…ASSP) and 307-320 (QPQV…PSTG). Residues 325–483 (RTVDEDPDER…MTPQSQSAGR (159 aa)) form an essential for binding adenovirus 2 E1A region. The span at 326–343 (TVDEDPDERRQRFLERNR) shows a compositional bias: basic and acidic residues. Residues 332–395 (DERRQRFLER…AQLKQLLLAH (64 aa)) enclose the bZIP domain. The basic motif stretch occupies residues 334 to 354 (RRQRFLERNRAAASRCRQKRK). The interval 360–388 (LEKKAEELTSQNIQLSNEVTLLRNEVAQL) is leucine-zipper. The interval 407 to 439 (TQGYLESPKESSEPTGSPAPVIQHSSATAPSNG) is disordered. Residues Ser413 and Ser423 each carry the phosphoserine modification. Residues 429–439 (QHSSATAPSNG) show a composition bias toward polar residues.

The protein belongs to the bZIP family. As to quaternary structure, homodimer; binds DNA as homodimer. Heterodimer; heterodimerizes with other members of ATF family and with JUN family members. Interacts with JNK2; the interaction does not phosphorylate ATF7 but acts as a docking site for other ATF-associated partners such as JUN family members. Interacts (via its transactivation domain) with TAF12 (isoforms TAFII15 and TAFII20); the interaction potentiates the transactivation activity (isoform TAFII20 only) and is inhibited by ATF7 sumoylation. Interacts with TAF4; the interaction inhibits the TAF12-dependent transactivation. Interacts with MAPK9; the interaction does not phosphorylate ATF7 but acts as a docking site for ATF7-associated partners such as JUN. Interacts with Ku complex components XRCC6 and XRCC7. Interacts with TERT. (Microbial infection) Interacts with adenovirus 2 E1A; the interaction enhances the ATF7-mediated viral transactivation activity which requires the zinc-binding domains of both E1A and ATF7. Post-translationally, on EGF stimulation, phosphorylated first on Thr-53 allowing subsequent phosphorylation on Thr-51. This latter phosphorylation prevents sumoylation, increases binding to TAF12 and enhances transcriptional activity. Sumoylation delays nuclear localization and inhibits transactivation activity through preventing binding to TAF12. RANBP2 appears to be the specific E3 ligase. In terms of processing, on EGF stimulation, phosphorylated first on Thr-53 allowing subsequent phosphorylation on Thr-51. This latter phosphorylation prevents sumoylation, increases binding to TAF12 and enhances transcriptional activity. Social isolation stress as well as TNF-alpha also induce the phosphorylation of ATF7. Phosphorylated in proliferating colonic and small intestinal epithelial cells. As to expression, expressed in various tissues including heart, brain, placenta, lung and skeletal muscle. Highest levels in skeletal muscle. Lowest in lung and placenta. In terms of tissue distribution, strongly expressed in skeletal muscle. Also expressed at lower levels in heart and lung.

Its subcellular location is the nucleus. The protein localises to the nucleoplasm. It is found in the chromosome. It localises to the telomere. The protein resides in the cytoplasm. In terms of biological role, stress-responsive chromatin regulator that plays a role in various biological processes including innate immunological memory, adipocyte differentiation or telomerase regulation. In absence of stress, contributes to the formation of heterochromatin and heterochromatin-like structure by recruiting histone H3K9 tri- and di-methyltransferases thus silencing the transcription of target genes such as STAT1 in adipocytes, or genes involved in innate immunity in macrophages and adipocytes. Stress induces ATF7 phosphorylation that disrupts interactions with histone methyltransferase and enhances the association with coactivators containing histone acetyltransferase and/or histone demethylase, leading to disruption of the heterochromatin-like structure and subsequently transcriptional activation. In response to TNF-alpha, which is induced by various stresses, phosphorylated ATF7 and telomerase are released from telomeres leading to telomere shortening. Also plays a role in maintaining epithelial regenerative capacity and protecting against cell death during intestinal epithelial damage and repair. Its function is as follows. Acts as a dominant repressor of the E-selectin/NF-ELAM1/delta-A promoter. Functionally, acts as a negative regulator, inhibiting both ATF2 and ATF7 transcriptional activities. It may exert these effects by sequestrating in the cytoplasm the Thr-53 phosphorylating kinase, preventing activation. The polypeptide is Cyclic AMP-dependent transcription factor ATF-7 (ATF7) (Homo sapiens (Human)).